The primary structure comprises 182 residues: Glutathione-regulated potassium-efflux system ancillary protein KefG (182 aa).

Belongs to the NAD(P)H dehydrogenase (quinone) family. KefG subfamily. As to quaternary structure, interacts with KefB.

The protein localises to the cell inner membrane. The catalysed reaction is a quinone + NADH + H(+) = a quinol + NAD(+). It catalyses the reaction a quinone + NADPH + H(+) = a quinol + NADP(+). In terms of biological role, regulatory subunit of a potassium efflux system that confers protection against electrophiles. Required for full activity of KefB. The chain is Glutathione-regulated potassium-efflux system ancillary protein KefG from Yersinia pestis bv. Antiqua (strain Nepal516).